Here is a 425-residue protein sequence, read N- to C-terminus: Dihydroorotase (425 aa).

Zn(2+) is bound by residues His59 and His61. Substrate is bound by residues His61–Arg63 and Asn93. The Zn(2+) site is built by Asp151, His178, and His231. Asn277 provides a ligand contact to substrate. Zn(2+) is bound at residue Asp304. Asp304 is a catalytic residue. Substrate-binding positions include His308 and Phe322–Gly323.

It belongs to the metallo-dependent hydrolases superfamily. DHOase family. Class I DHOase subfamily. Zn(2+) serves as cofactor.

The enzyme catalyses (S)-dihydroorotate + H2O = N-carbamoyl-L-aspartate + H(+). The protein operates within pyrimidine metabolism; UMP biosynthesis via de novo pathway; (S)-dihydroorotate from bicarbonate: step 3/3. Catalyzes the reversible cyclization of carbamoyl aspartate to dihydroorotate. The polypeptide is Dihydroorotase (Staphylococcus epidermidis (strain ATCC 12228 / FDA PCI 1200)).